The primary structure comprises 597 residues: Elongation factor 4 (597 aa).

Residues 2–184 form the tr-type G domain; sequence KNIRNFSIIA…EVVNKIPPPK (183 aa). GTP contacts are provided by residues 14 to 19 and 131 to 134; these read DHGKST and NKID.

The protein belongs to the TRAFAC class translation factor GTPase superfamily. Classic translation factor GTPase family. LepA subfamily.

The protein localises to the cell inner membrane. The catalysed reaction is GTP + H2O = GDP + phosphate + H(+). Its function is as follows. Required for accurate and efficient protein synthesis under certain stress conditions. May act as a fidelity factor of the translation reaction, by catalyzing a one-codon backward translocation of tRNAs on improperly translocated ribosomes. Back-translocation proceeds from a post-translocation (POST) complex to a pre-translocation (PRE) complex, thus giving elongation factor G a second chance to translocate the tRNAs correctly. Binds to ribosomes in a GTP-dependent manner. The polypeptide is Elongation factor 4 (Chromobacterium violaceum (strain ATCC 12472 / DSM 30191 / JCM 1249 / CCUG 213 / NBRC 12614 / NCIMB 9131 / NCTC 9757 / MK)).